We begin with the raw amino-acid sequence, 67 residues long: Phycobilisome 7.8 kDa linker polypeptide, allophycocyanin-associated, core (67 aa).

The CpcD-like domain occupies 1-56 (MRMFKITACVPSQTRIRTQRELQNTYFTKLVPYENWFREQQRIQKMGGKIVKVELF).

This sequence belongs to the phycobilisome linker protein family.

The protein resides in the cellular thylakoid membrane. Functionally, rod linker protein, associated with allophycocyanin. Linker polypeptides determine the state of aggregation and the location of the disk-shaped phycobiliprotein units within the phycobilisome and modulate their spectroscopic properties in order to mediate a directed and optimal energy transfer. The polypeptide is Phycobilisome 7.8 kDa linker polypeptide, allophycocyanin-associated, core (apcC) (Thermosynechococcus vestitus (strain NIES-2133 / IAM M-273 / BP-1)).